Reading from the N-terminus, the 56-residue chain is UPF0434 protein CbuK_1382 (56 aa).

The protein belongs to the UPF0434 family.

In Coxiella burnetii (strain CbuK_Q154) (Coxiella burnetii (strain Q154)), this protein is UPF0434 protein CbuK_1382.